The chain runs to 147 residues: Transcriptional repressor NrdR (147 aa).

Residues 3–34 (CPFCGHLETQVVETRVSEDADFVRRRRQCSAC) fold into a zinc finger. Residues 49–139 (PVVVKKDGSR…VYRSFEDVDE (91 aa)) form the ATP-cone domain.

It belongs to the NrdR family. It depends on Zn(2+) as a cofactor.

Functionally, negatively regulates transcription of bacterial ribonucleotide reductase nrd genes and operons by binding to NrdR-boxes. The sequence is that of Transcriptional repressor NrdR from Variovorax paradoxus (strain S110).